We begin with the raw amino-acid sequence, 104 residues long: MILTNTEDVAGHKIIKNLGLVKGNTIRAKHIGKDILAGLRSIVGGEIEEYTQMLDEARNEAIRRMEAEAKEKGANAIICVRFSTSAVMQNASEVMAYGTAVIVE.

It belongs to the UPF0145 family.

This chain is UPF0145 protein DET1617, found in Dehalococcoides mccartyi (strain ATCC BAA-2266 / KCTC 15142 / 195) (Dehalococcoides ethenogenes (strain 195)).